The primary structure comprises 198 residues: Holliday junction resolvase RecU (198 aa).

Residues 1–22 (MVNYPHKLSSQKRQTSLSQPKN) are disordered. Residues 11-22 (QKRQTSLSQPKN) show a composition bias toward polar residues. Mg(2+) is bound by residues threonine 81, aspartate 83, glutamate 96, and glutamine 115.

It belongs to the RecU family. Mg(2+) is required as a cofactor.

The protein resides in the cytoplasm. The catalysed reaction is Endonucleolytic cleavage at a junction such as a reciprocal single-stranded crossover between two homologous DNA duplexes (Holliday junction).. In terms of biological role, endonuclease that resolves Holliday junction intermediates in genetic recombination. Cleaves mobile four-strand junctions by introducing symmetrical nicks in paired strands. Promotes annealing of linear ssDNA with homologous dsDNA. Required for DNA repair, homologous recombination and chromosome segregation. The polypeptide is Holliday junction resolvase RecU (Streptococcus pneumoniae (strain Hungary19A-6)).